The chain runs to 326 residues: BTB/POZ domain-containing protein At1g21780 (326 aa).

Positions 161–228 (TDVIIHTADG…LYGNITQEEF (68 aa)) constitute a BTB domain.

In terms of assembly, homodimer. Interacts with CUL3A and CUL3B.

Its pathway is protein modification; protein ubiquitination. In terms of biological role, may act as a substrate-specific adapter of an E3 ubiquitin-protein ligase complex (CUL3-RBX1-BTB) which mediates the ubiquitination and subsequent proteasomal degradation of target proteins. The sequence is that of BTB/POZ domain-containing protein At1g21780 from Arabidopsis thaliana (Mouse-ear cress).